Here is a 116-residue protein sequence, read N- to C-terminus: Iron-sulfur cluster insertion protein ErpA (116 aa).

Iron-sulfur cluster is bound by residues Cys44, Cys108, and Cys110.

Belongs to the HesB/IscA family. As to quaternary structure, homodimer. Iron-sulfur cluster is required as a cofactor.

Functionally, required for insertion of 4Fe-4S clusters for at least IspG. This chain is Iron-sulfur cluster insertion protein ErpA, found in Francisella tularensis subsp. mediasiatica (strain FSC147).